A 183-amino-acid chain; its full sequence is uncharacterized protein (183 aa).

Helical transmembrane passes span F26–Y48, L72–I91, I104–F121, and F125–L147.

The protein resides in the cell membrane. This is an uncharacterized protein from Aquifex aeolicus (strain VF5).